The chain runs to 947 residues: Protocadherin alpha-4 (947 aa).

The first 29 residues, 1–29, serve as a signal peptide directing secretion; sequence MEFSWGSGQESRRLLLLLLLLSAWEAGNG. Cadherin domains follow at residues 30–133, 134–242, 243–350, 351–455, 456–565, and 588–678; these read QLHY…PPVF, PATQ…APAF, DRTI…VPDL, EFKS…APAF, AQPE…APAL, and DHVV…APKA. At 30–697 the chain is on the extracellular side; that stretch reads QLHYSVSEEA…GPDAALVDVN (668 aa). An intrachain disulfide couples cysteine 96 to cysteine 102. Asparagine 139, asparagine 257, and asparagine 265 each carry an N-linked (GlcNAc...) asparagine glycan. An N-linked (GlcNAc...) asparagine glycan is attached at asparagine 548. A helical transmembrane segment spans residues 698-718; it reads VYLIIAICAVSSLLVLTLLLY. The Cytoplasmic portion of the chain corresponds to 719–947; it reads TALRCSAPPT…GNSTTDNSDQ (229 aa). 6 PXXP repeats span residues 734–737, 774–777, 796–799, 829–832, 870–873, and 888–891; these read PGKP, PSLP, PRQP, PGGP, PGNP, and PGSP. Residues 734-891 are 6 X 4 AA repeats of P-X-X-P; the sequence is PGKPTLVCSS…PDKFIIPGSP (158 aa). The required for interaction with FYN stretch occupies residues 738 to 947; it reads TLVCSSAVGS…GNSTTDNSDQ (210 aa). 2 disordered regions span residues 754–805 and 828–853; these read RRPR…DWRY and GPGGPDQQWPTVSSATPEPEAGEVSP. The tract at residues 892-947 is disordered; that stretch reads AIISIRQEPANSQIDKSDFITFGKKEETKKKKKKKKGNKTQEKKEKGNSTTDNSDQ. Basic and acidic residues predominate over residues 906-920; sequence DKSDFITFGKKEETK.

In terms of assembly, forms homodimers in trans (molecules expressed by two different cells). Forms promiscuous heterodimers in cis (at the plasma membrane of the same cell) with other protocadherins. Interacts with FYN.

The protein resides in the cell membrane. Calcium-dependent cell-adhesion protein involved in cells self-recognition and non-self discrimination. Thereby, it is involved in the establishment and maintenance of specific neuronal connections in the brain. In Pan troglodytes (Chimpanzee), this protein is Protocadherin alpha-4.